The primary structure comprises 248 residues: tRNA N(3)-methylcytidine methyltransferase trm141 (248 aa).

6 residues coordinate S-adenosyl-L-methionine: W23, Y27, G63, D86, D112, and I133.

The protein belongs to the methyltransferase superfamily. METL family.

Its subcellular location is the cytoplasm. The protein localises to the nucleus. It catalyses the reaction cytidine(32) in tRNA(Ser) + S-adenosyl-L-methionine = N(3)-methylcytidine(32) in tRNA(Ser) + S-adenosyl-L-homocysteine + H(+). Its function is as follows. S-adenosyl-L-methionine-dependent methyltransferase that mediates N(3)-methylcytidine modification of residue 32 of the tRNA anticodon loop of tRNA(Ser). N(3)-methylcytidine methylation by trm141 requires the formation of N(6)-dimethylallyladenosine(37) (i6A37) by tit1 as prerequisite. Does not catalyze N(3)-methylcytidine modification of tRNA(Thr). The protein is tRNA N(3)-methylcytidine methyltransferase trm141 of Schizosaccharomyces pombe (strain 972 / ATCC 24843) (Fission yeast).